Here is a 1404-residue protein sequence, read N- to C-terminus: Clustered mitochondria protein homolog (1404 aa).

The region spanning 357–646 (HTHHADALRS…RLNPVDINWL (290 aa)) is the Clu domain. Residues 528 to 540 (ADELPEADGETTE) show a composition bias toward acidic residues. 4 disordered regions span residues 528 to 561 (ADEL…SNKA), 706 to 735 (DAKA…ERLD), 996 to 1046 (GCHG…ARAT), and 1337 to 1372 (SERQ…GNGT). The span at 706–723 (DAKAKEAASKEDGEKTEA) shows a compositional bias: basic and acidic residues. Composition is skewed to low complexity over residues 1021–1046 (NEQQ…ARAT) and 1358–1372 (AAIT…GNGT).

Belongs to the CLU family. In terms of assembly, may associate with the eukaryotic translation initiation factor 3 (eIF-3) complex.

The protein resides in the cytoplasm. In terms of biological role, mRNA-binding protein involved in proper cytoplasmic distribution of mitochondria. The sequence is that of Clustered mitochondria protein homolog from Mycosarcoma maydis (Corn smut fungus).